The sequence spans 328 residues: MIFSILEHILTHISFSVVSIVLTIYFLTLLVNLDEIIGFFDSLDKGIIITFFGITGLLFTRWIYSGHFPLSNLYESLIFLSWAFSIIHMVSYFNKKQQNHLNAITAPSAIFIQGFATSGLLNKMPQSAILVPALQSQWLMMHVSLMILGYGALLCGSLLSIALLVITFRKVGPTFWKKNIKKNFLLNELFSFDVLYYINERNSILLQQNITFSFSKNYYRYQLIQQLDYWSFRIISLGFIFLTVGILSGAVWANETWGSYWNWDPKETWAFITWTIFAIYLHIKTNRNVRGINSAIVASIGFLLIWICYFGVILLGIGLHSYGSFTSN.

8 helical membrane-spanning segments follow: residues 13–33, 46–66, 73–93, 101–121, 146–166, 234–254, 263–283, and 295–315; these read ISFS…LVNL, GIII…IYSG, LYES…VSYF, LNAI…SGLL, MILG…LLVI, IISL…VWAN, WDPK…YLHI, and AIVA…VILL.

The protein belongs to the CcmF/CycK/Ccl1/NrfE/CcsA family. As to quaternary structure, may interact with Ccs1.

The protein localises to the plastid. It is found in the chloroplast thylakoid membrane. In terms of biological role, required during biogenesis of c-type cytochromes (cytochrome c6 and cytochrome f) at the step of heme attachment. The sequence is that of Cytochrome c biogenesis protein CcsA from Crucihimalaya wallichii (Rock-cress).